Here is a 430-residue protein sequence, read N- to C-terminus: MVSYEPMRGMEDYFDVDSKIIRWIESNFRETVEKAGYKEAMTPIVEDFELFSLKGGEELRNTMYVFKDKGEREVALRPEITPSIVRLYLNSLQHYPKPLRIFYIGRVYRYDEPQQGRYREFRQAGVELLGSDSILADIEVLHLLENFYRRINLKDKISLKINNIGIFRIIFNKLSFDEQVQEHLLHLLDKGKIEEAEKILDEKIRDNSKIRQFIYTLITNGRSLKLEEAMREAEKTELSELVNEIENLKLISEILSSLNLDHIVDLGFVRGLAYYTGPIFEVVKRDLPFSIAGGGRYDSLVEVYGGNRTPAVGFAIGIERTMYALNKDGIKFDSNAPLVAVVALDRSVIPHALSIVSMLRDKGFITVLNNKEIPLSKLVPLYAEQGFTHLIIMGQKEITSGKVTVRNLVKREQITTDVKELTNVITAPDK.

This sequence belongs to the class-II aminoacyl-tRNA synthetase family.

It localises to the cytoplasm. It catalyses the reaction tRNA(His) + L-histidine + ATP = L-histidyl-tRNA(His) + AMP + diphosphate + H(+). This is Histidine--tRNA ligase from Metallosphaera sedula (strain ATCC 51363 / DSM 5348 / JCM 9185 / NBRC 15509 / TH2).